Consider the following 162-residue polypeptide: Ribosome maturation factor RimP (162 aa).

It belongs to the RimP family.

It is found in the cytoplasm. Required for maturation of 30S ribosomal subunits. This is Ribosome maturation factor RimP from Cupriavidus necator (strain ATCC 17699 / DSM 428 / KCTC 22496 / NCIMB 10442 / H16 / Stanier 337) (Ralstonia eutropha).